A 322-amino-acid polypeptide reads, in one-letter code: ATP-dependent 6-phosphofructokinase (322 aa).

Residue glycine 11 coordinates ATP. 21–25 (RAVTR) serves as a coordination point for ADP. ATP-binding positions include 72–73 (RC) and 102–105 (GDGS). Aspartate 103 provides a ligand contact to Mg(2+). A substrate-binding site is contributed by 127–129 (TID). Aspartate 129 serves as the catalytic Proton acceptor. Arginine 156 serves as a coordination point for ADP. Residues arginine 164 and 171–173 (MGR) each bind substrate. Residues 187 to 189 (GAE), arginine 213, and 215 to 217 (KKH) each bind ADP. Residues glutamate 224, arginine 245, and 251-254 (HIQR) contribute to the substrate site.

The protein belongs to the phosphofructokinase type A (PFKA) family. ATP-dependent PFK group I subfamily. Prokaryotic clade 'B1' sub-subfamily. In terms of assembly, homotetramer. Mg(2+) serves as cofactor.

Its subcellular location is the cytoplasm. The enzyme catalyses beta-D-fructose 6-phosphate + ATP = beta-D-fructose 1,6-bisphosphate + ADP + H(+). It functions in the pathway carbohydrate degradation; glycolysis; D-glyceraldehyde 3-phosphate and glycerone phosphate from D-glucose: step 3/4. With respect to regulation, allosterically activated by ADP and other diphosphonucleosides, and allosterically inhibited by phosphoenolpyruvate. Functionally, catalyzes the phosphorylation of D-fructose 6-phosphate to fructose 1,6-bisphosphate by ATP, the first committing step of glycolysis. In Staphylococcus epidermidis (strain ATCC 12228 / FDA PCI 1200), this protein is ATP-dependent 6-phosphofructokinase.